A 449-amino-acid chain; its full sequence is Gallate transporter (449 aa).

The next 12 helical transmembrane spans lie at Trp26–Met46, Ala62–Ala82, Lys92–Ala112, Leu123–Tyr143, Ile155–Ile175, Val183–Pro203, Leu262–Leu282, Thr298–Met318, Val326–Leu346, Ser349–Leu369, Trp388–Leu408, and Leu414–Ala434.

This sequence belongs to the major facilitator superfamily. Sugar transporter (TC 2.A.1.1) family.

The protein localises to the membrane. Transporter that specifically mediates the uptake of gallate. The polypeptide is Gallate transporter (galT) (Pseudomonas putida (Arthrobacter siderocapsulatus)).